The chain runs to 181 residues: Inner membrane-spanning protein YciB (181 aa).

5 helical membrane passes run 22–42 (IYTA…ILYF), 50–70 (MHLV…AFHD), 72–92 (AFIK…LAVS), 118–138 (VTWY…YVAF), and 148–168 (FKVF…VFYI).

It belongs to the YciB family.

The protein localises to the cell inner membrane. Its function is as follows. Plays a role in cell envelope biogenesis, maintenance of cell envelope integrity and membrane homeostasis. The polypeptide is Inner membrane-spanning protein YciB (Shewanella denitrificans (strain OS217 / ATCC BAA-1090 / DSM 15013)).